Consider the following 194-residue polypeptide: NADH-ubiquinone oxidoreductase subunit NUO2 (194 aa).

Fungal-specific subunit of the mitochondrial membrane respiratory chain NADH dehydrogenase (Complex I). Complex I functions in the transfer of electrons from NADH to the respiratory chain. The immediate electron acceptor for the enzyme is believed to be ubiquinone. Plays a role in cell wall integrity and is involved in osmotic and oxidative resistance, yeast to hypha transition, and virulence via providing the ability to damage and invade host cells such as oral epithelial cells. This Candida albicans (strain SC5314 / ATCC MYA-2876) (Yeast) protein is NADH-ubiquinone oxidoreductase subunit NUO2.